Consider the following 237-residue polypeptide: Glutathione-independent glyoxalase HSP31 (237 aa).

Catalysis depends on residues Cys138, His139, and Glu170. Cysteine sulfinic acid (-SO2H) is present on Cys138.

The protein belongs to the peptidase C56 family. HSP31-like subfamily. Homodimer. Cys-138 is easily oxidized to sulfinic acid.

It localises to the cytoplasm. It is found in the P-body. It catalyses the reaction methylglyoxal + H2O = (R)-lactate + H(+). Catalyzes the conversion of methylglyoxal (MG) to D-lactate in a single glutathione (GSH)-independent step. May play a role in detoxifying endogenously produced glyoxals. Involved in protection against reactive oxygen species (ROS). Important for viability in stationary phase. May negatively regulate TORC1 in response to nutrient limitation. This chain is Glutathione-independent glyoxalase HSP31, found in Saccharomyces cerevisiae (strain ATCC 204508 / S288c) (Baker's yeast).